The chain runs to 229 residues: MLTWLNRNSLDFPPLEKALREPNGLLAAGGDLSADRLISAYRHGCFPWFQDGQPILWWSPDPRTVLFPEELHISRSLAKVLRQSRYRVTFDQDFASVIKACAAPRSYANETWITGSMQAAYVELHRRGHAHSVEVWDQDELVGGLYGLAMGQLFFGESMFSRADNASKVGFATLVEHLTAWGFVLIDCQMPTQHLHSFGARSIPRQTFADYLSRHLDQPTDADWSARRV.

The protein belongs to the L/F-transferase family.

It is found in the cytoplasm. The enzyme catalyses N-terminal L-lysyl-[protein] + L-leucyl-tRNA(Leu) = N-terminal L-leucyl-L-lysyl-[protein] + tRNA(Leu) + H(+). The catalysed reaction is N-terminal L-arginyl-[protein] + L-leucyl-tRNA(Leu) = N-terminal L-leucyl-L-arginyl-[protein] + tRNA(Leu) + H(+). It catalyses the reaction L-phenylalanyl-tRNA(Phe) + an N-terminal L-alpha-aminoacyl-[protein] = an N-terminal L-phenylalanyl-L-alpha-aminoacyl-[protein] + tRNA(Phe). Functionally, functions in the N-end rule pathway of protein degradation where it conjugates Leu, Phe and, less efficiently, Met from aminoacyl-tRNAs to the N-termini of proteins containing an N-terminal arginine or lysine. The polypeptide is Leucyl/phenylalanyl-tRNA--protein transferase (Pseudomonas syringae pv. syringae (strain B728a)).